We begin with the raw amino-acid sequence, 837 residues long: MANILKTIIENDKGEIRRLEKMADKVFKYEDQMAALTDDQLKAKTVEFKERYQNGESLDSLLYEAFAVVREGAKRVLGLFPYKVQVMGGIVLHHGDVPEMRTGEGKTLTATMPVYLNALSGKGVHVVTVNEYLSERDATEMGELYSWLGLSVGINLATKSPMEKKEAYECDITYSTNSEIGFDYLRDNMVVRAENMVQRPLNYALVDEVDSILIDEARTPLIVSGANAVETSQLYHMADHYVKSLNKDDYIIDVQSKTIGLSDSGIDRAESYFKLENLYDIENVALTHFIDNALRANYIMLLDIDYVVSEEQEILIVDQFTGRTMEGRRYSDGLHQAIEAKEGVPIQDETKTSASITYQNLFRMYKKLSGMTGTGKTEEEEFREIYNIRVIPIPTNRPVQRIDHSDLLYASIESKFKAVVEDVKARYQKGQPVLVGTVAVETSDYISKKLVAAGVPHEVLNAKNHYREAQIIMNAGQRGAVTIATNMAGRGTDIKLGEGVRELGGLCVIGTERHESRRIDNQLRGRSGRQGDPGESQFYLSLEDDLMKRFGSERLKGIFERLNMSEEAIESRMLTRQVEAAQKRVEGNNYDTRKQVLQYDDVMREQREIIYTQRYDVITADRDLAPEIQSMIKRTLERVVDGHARAKQDEKLEAILNFAKYNLLPEDSITMEDLSGLSDKAIKEELFQRALKVYDSQVSKLRDEEAVKEFQKVLILRVVDNKWTDHIDALDQLRNAVGLRGYAQNNPVVEYQAEGFRMFNDMIGSIEFDVTRLMMKAQIHEQERPQAERHISTTATRNIAAHQASMPEDLDLSQIGRNELCPCGSGKKFKNCHGKRQ.

Residues Gln-85, 103-107 (GEGKT), and Asp-493 each bind ATP. 4 residues coordinate Zn(2+): Cys-821, Cys-823, Cys-832, and His-833.

The protein belongs to the SecA family. In terms of assembly, monomer and homodimer. Part of the essential Sec protein translocation apparatus which comprises SecA, SecYEG and auxiliary proteins SecDF. Other proteins may also be involved. Requires Zn(2+) as cofactor.

The protein localises to the cell membrane. The protein resides in the cytoplasm. The catalysed reaction is ATP + H2O + cellular proteinSide 1 = ADP + phosphate + cellular proteinSide 2.. Functionally, part of the Sec protein translocase complex. Interacts with the SecYEG preprotein conducting channel. Has a central role in coupling the hydrolysis of ATP to the transfer of proteins into and across the cell membrane, serving as an ATP-driven molecular motor driving the stepwise translocation of polypeptide chains across the membrane. This Streptococcus pneumoniae (strain P1031) protein is Protein translocase subunit SecA.